We begin with the raw amino-acid sequence, 495 residues long: Monoamine oxidase N (495 aa).

Residues 1–19 are compositionally biased toward polar residues; the sequence is MTSRDGYQWTPETGLTQGV. The tract at residues 1–23 is disordered; sequence MTSRDGYQWTPETGLTQGVPSLG. Residues 493-495 carry the Microbody targeting signal motif; sequence ARL.

Belongs to the flavin monoamine oxidase family. It depends on FAD as a cofactor.

Its subcellular location is the peroxisome. The enzyme catalyses a secondary aliphatic amine + O2 + H2O = a primary amine + an aldehyde + H2O2. This Aspergillus niger protein is Monoamine oxidase N (maoN).